Here is a 100-residue protein sequence, read N- to C-terminus: Urease subunit gamma (100 aa).

This sequence belongs to the urease gamma subunit family. Heterotrimer of UreA (gamma), UreB (beta) and UreC (alpha) subunits. Three heterotrimers associate to form the active enzyme.

Its subcellular location is the cytoplasm. It catalyses the reaction urea + 2 H2O + H(+) = hydrogencarbonate + 2 NH4(+). It participates in nitrogen metabolism; urea degradation; CO(2) and NH(3) from urea (urease route): step 1/1. This is Urease subunit gamma from Synechococcus sp. (strain CC9605).